A 237-amino-acid polypeptide reads, in one-letter code: DNA repair protein RecO (237 aa).

It belongs to the RecO family.

Its function is as follows. Involved in DNA repair and RecF pathway recombination. The protein is DNA repair protein RecO of Rickettsia peacockii (strain Rustic).